The chain runs to 382 residues: Cell division protein FtsZ (382 aa).

GTP-binding positions include 21-25 (GGGSN), 108-110 (GTG), Glu-139, Arg-143, and Asp-187. The interval 322 to 382 (RAQQQSNFNR…FLRNRRRKSR (61 aa)) is disordered. The span at 340–352 (KSKEKEAEKKEPR) shows a compositional bias: basic and acidic residues.

Belongs to the FtsZ family. Homodimer. Polymerizes to form a dynamic ring structure in a strictly GTP-dependent manner. Interacts directly with several other division proteins.

It localises to the cytoplasm. Functionally, essential cell division protein that forms a contractile ring structure (Z ring) at the future cell division site. The regulation of the ring assembly controls the timing and the location of cell division. One of the functions of the FtsZ ring is to recruit other cell division proteins to the septum to produce a new cell wall between the dividing cells. Binds GTP and shows GTPase activity. The polypeptide is Cell division protein FtsZ (Halalkalibacterium halodurans (strain ATCC BAA-125 / DSM 18197 / FERM 7344 / JCM 9153 / C-125) (Bacillus halodurans)).